We begin with the raw amino-acid sequence, 316 residues long: Peroxidase 31 (316 aa).

The first 19 residues, 1–19 (MASLKSLFLLFLFFFTAQS), serve as a signal peptide directing secretion. 4 disulfides stabilise this stretch: Cys-30–Cys-111, Cys-63–Cys-68, Cys-117–Cys-312, and Cys-196–Cys-222. His-61 acts as the Proton acceptor in catalysis. Residues Asp-62, Gly-67, Asp-69, and Ser-71 each coordinate Ca(2+). Pro-159 lines the substrate pocket. Residue His-189 coordinates heme b. Ser-190 provides a ligand contact to Ca(2+). N-linked (GlcNAc...) asparagine glycosylation occurs at Asn-206. Residues Asp-236, Thr-239, and Asp-244 each coordinate Ca(2+).

It belongs to the peroxidase family. Classical plant (class III) peroxidase subfamily. It depends on heme b as a cofactor. Ca(2+) serves as cofactor.

It localises to the secreted. The enzyme catalyses 2 a phenolic donor + H2O2 = 2 a phenolic radical donor + 2 H2O. Removal of H(2)O(2), oxidation of toxic reductants, biosynthesis and degradation of lignin, suberization, auxin catabolism, response to environmental stresses such as wounding, pathogen attack and oxidative stress. These functions might be dependent on each isozyme/isoform in each plant tissue. The chain is Peroxidase 31 (PER31) from Arabidopsis thaliana (Mouse-ear cress).